A 1434-amino-acid polypeptide reads, in one-letter code: Ankyrin and armadillo repeat-containing protein (1434 aa).

The helical transmembrane segment at 309–329 threads the bilayer; sequence IRRGIGYLKLICFLIPFLLSL. 5 ANK repeats span residues 532 to 561, 569 to 598, 602 to 631, 638 to 667, and 671 to 701; these read AGYTIFHHAALHNRVSIICQLCNANFKVNQ, QGPTPLHLAAQACSLETTVCLLCSKADYTL, RGWMPIHFAAFYDNVCIIIALCRKDPSLLE, NQCTPLLLAATSGALDTIQYLFSIGANWRK, and KGNNIIHLSVLTFHTEVLKYIIKLNIPELPV. 6 ARM repeats span residues 732–771, 773–812, 814–852, 855–894, 897–936, and 1072–1112; these read DQYWRCILDAGTIPALINLLKSSKIKLQCKTVGLLSNIST, KSAVHALVEAGGIPSLINLLVCDEPEVHSRCAVILYDIAQ, ENKDVIAKYNGIPSLINLLNLNIENVLVNVMNCIRVLCI, ENNQRAVREHKGLPYLIRFLSSDSDVLKAVSSAAIAEVGR, KEIQDAIAMEGAIPPLVALFKGKQISVQMKGAMAVESLAS, and PVSQ…CIVL.

In terms of tissue distribution, ubiquitously expressed with highest level in pancreas and lowest in skeletal muscle.

The protein localises to the membrane. The chain is Ankyrin and armadillo repeat-containing protein (ANKAR) from Homo sapiens (Human).